The following is a 198-amino-acid chain: Leucine-rich melanocyte differentiation-associated protein (198 aa).

4 LRR repeats span residues E2–S22, S26–P47, R48–L69, and A75–E95. The region spanning K96–R134 is the LRRCT domain.

As to expression, in the embryo, expressed in melanoblasts. In the fetus, expressed in melanocytes. Not detected in retinal pigment epithelial cells.

Required for melanocyte differentiation. In Homo sapiens (Human), this protein is Leucine-rich melanocyte differentiation-associated protein.